The primary structure comprises 679 residues: NADPH--cytochrome P450 reductase (679 aa).

Topologically, residues 1–21 (MASEQTIDGAAAIPSGGGDEP) are lumenal. The chain crosses the membrane as a helical span at residues 22–42 (FLGLLDVALLAVLIGGAAFYF). Over 43–679 (LRSRKKEEEP…QKRYSADVWS (637 aa)) the chain is Cytoplasmic. Residues 84-228 (LVVFYGSQTG…DFITWKDRFW (145 aa)) enclose the Flavodoxin-like domain. Residues 90 to 95 (SQTGTG), 142 to 145 (ATYG), 177 to 186 (LGNKTYEHYN), and Asp-212 each bind FMN. One can recognise an FAD-binding FR-type domain in the interval 283-523 (KNPFLAPIKV…FIRKSQFRLP (241 aa)). Arg-302 is a binding site for NADP(+). FAD-binding positions include 458–461 (RYYS), 476–478 (TAV), Tyr-482, and 492–495 (GVAT). NADP(+) is bound by residues Thr-537, 597-598 (SR), 603-607 (KVYVQ), and Asp-640. Trp-678 is a binding site for FAD.

Belongs to the NADPH--cytochrome P450 reductase family. This sequence in the N-terminal section; belongs to the flavodoxin family. It in the C-terminal section; belongs to the flavoprotein pyridine nucleotide cytochrome reductase family. As to quaternary structure, interacts with sturkopf. FAD serves as cofactor. It depends on FMN as a cofactor. In terms of tissue distribution, high in antennae.

The protein localises to the endoplasmic reticulum membrane. It carries out the reaction 2 oxidized [cytochrome P450] + NADPH = 2 reduced [cytochrome P450] + NADP(+) + H(+). This enzyme is required for electron transfer from NADP to cytochrome p450 in microsomes. It can also provide electron transfer to heme oxygenase and cytochrome b5. May function to clear the olfactory organ (antennae) from accumulating chemicals. This Drosophila melanogaster (Fruit fly) protein is NADPH--cytochrome P450 reductase (Cpr).